The chain runs to 249 residues: Small ribosomal subunit protein uS4m (249 aa).

In terms of domain architecture, S4 RNA-binding spans 133–193; sequence RRLDIIIYRA…PEIVNLLRNQ (61 aa).

It belongs to the universal ribosomal protein uS4 family.

The protein resides in the mitochondrion. This Reclinomonas americana protein is Small ribosomal subunit protein uS4m (RPS4).